We begin with the raw amino-acid sequence, 520 residues long: Transcription factor MYB33 (520 aa).

Positions 1 to 24 are disordered; sequence MSYTSTDSDHNESPAADDNGSDCR. HTH myb-type domains follow at residues 29–81 and 82–136; these read GHAL…ANHL and RPNL…KRRQ. 2 DNA-binding regions (H-T-H motif) span residues 57–81 and 109–132; these read WNAVQKHTSLFRCGKSCRLRWANHL and WARMAAHLPGRTDNEIKNYWNTRI. Over residues 331-342 the composition is skewed to low complexity; sequence SSSPPHSDLLDP. 2 disordered regions span residues 331–359 and 426–447; these read SSSPPHSDLLDPFDTYIQSPPPPTGGEES and EMSTQNADETPPRQREKKRKPL.

In terms of tissue distribution, mostly expressed in stems, shoot apices, flowers and floral shoot tips, and, to a lower extent, in roots (e.g. root tips), seedlings, leaves and siliques.

It localises to the nucleus. In terms of biological role, transcriptional activator of alpha-amylase expression that binds to 5'-CAACTGTC-3' motif in target gene promoter. Positive regulator of abscisic acid (ABA) responses leading to growth arrest during seed germination. In vegetative tissues, inhibits growth by reducing cell proliferation. Promotes the expression of aleurone-related genes (e.g. CP1, CP, GASA1, BXL1 and BXL2) in seeds. Together with MYB65 and MYB101, promotes the programmed cell death (PCD) the vacuolation of protein storage vacuoles (PSVs) in the aleurone layers during seed germination. Binds to a GARE site (GA-response element) in the LEAFY promoter, essential for its gibberellic acid (GA)-mediated induction. Together with MYB65, facilitates anther and tapetum development. The protein is Transcription factor MYB33 of Arabidopsis thaliana (Mouse-ear cress).